The chain runs to 692 residues: UvrABC system protein B (692 aa).

The Helicase ATP-binding domain occupies 32-418 (DNIENGEKAQ…QTDTIVEQII (387 aa)). 45–52 (GATGTGKT) is a binding site for ATP. The short motif at 98-121 (YYDYYQPEAYVPSSDTYIEKDSSV) is the Beta-hairpin element. Residues 436–631 (QIDDLVGEIH…TIKKEIRDLI (196 aa)) enclose the Helicase C-terminal domain. The UVR domain occupies 656–691 (KALVKKLEKEMQQAASALDFEGAAQLRDMVLELRAM).

The protein belongs to the UvrB family. As to quaternary structure, forms a heterotetramer with UvrA during the search for lesions. Interacts with UvrC in an incision complex.

It localises to the cytoplasm. Functionally, the UvrABC repair system catalyzes the recognition and processing of DNA lesions. A damage recognition complex composed of 2 UvrA and 2 UvrB subunits scans DNA for abnormalities. Upon binding of the UvrA(2)B(2) complex to a putative damaged site, the DNA wraps around one UvrB monomer. DNA wrap is dependent on ATP binding by UvrB and probably causes local melting of the DNA helix, facilitating insertion of UvrB beta-hairpin between the DNA strands. Then UvrB probes one DNA strand for the presence of a lesion. If a lesion is found the UvrA subunits dissociate and the UvrB-DNA preincision complex is formed. This complex is subsequently bound by UvrC and the second UvrB is released. If no lesion is found, the DNA wraps around the other UvrB subunit that will check the other stand for damage. This is UvrABC system protein B from Lactococcus lactis subsp. lactis (strain IL1403) (Streptococcus lactis).